Consider the following 281-residue polypeptide: Transformer-2 protein homolog alpha (281 aa).

The segment at Met1 to Asn116 is disordered. Ser2 carries the N-acetylserine modification. Ser2 and Ser14 each carry phosphoserine. Thr24 carries the post-translational modification Phosphothreonine. The segment covering Arg51–Ser82 has biased composition (basic residues). 3 positions are modified to phosphoserine: Ser80, Ser82, and Ser84. Thr86 carries the post-translational modification Phosphothreonine. Residues Arg90–Gly108 are compositionally biased toward basic residues. 2 positions are modified to phosphoserine: Ser94 and Ser96. The RRM domain occupies Thr117–Thr195. A Glycyl lysine isopeptide (Lys-Gly) (interchain with G-Cter in SUMO2) cross-link involves residue Lys196. The tract at residues Lys196 to Gly223 is linker. Residues His199–Tyr281 are disordered. Phosphothreonine is present on residues Thr200 and Thr202. Residues Ser213–Gly231 show a composition bias toward gly residues. Arg233 bears the Omega-N-methylarginine mark. A compositionally biased stretch (basic and acidic residues) spans Arg233–Arg257. Ser237 carries the post-translational modification Phosphoserine. The span at Tyr267 to Tyr281 shows a compositional bias: basic residues.

The protein belongs to the splicing factor SR family. As to quaternary structure, binds to A3 enhancer proteins SRp75, SRp55, SRp40 and SRp30. Interacts with ILDR1 (via C-terminus) and ILDR2. In terms of processing, phosphorylated in the RS domains. As to expression, expressed in inner ear.

Its subcellular location is the nucleus. Its function is as follows. Sequence-specific RNA-binding protein which participates in the control of pre-mRNA splicing. This is Transformer-2 protein homolog alpha from Mus musculus (Mouse).